Consider the following 2353-residue polypeptide: MNIVRKLNLMIPWSIFLLHVLLFSLQEYICASSILMGTSKNGFNENRQKRALLAAQFEATSPRYFFHDAINWGESKIKGSCPYECLNGAFCSKTGTCDCQIFQALGTRCQIIPNMGNGRDGICKTWGQYHFETFDGIYYYFPGNCSYIFAKDCGDLEPRYTVWVHNSPKCLGSVYSCYRSISLFFSNQEEIRIYGHEIKKNGISLTLPQTIGQIFIEKLADYILVKTTFGFSLAWDGISGIYLKLSEDHKGKSCGLCGNYNDIQSDDFIILQEDYTEDIAMFANSWSVQTPDDTKCVLTPSDFPNPCSSGMPAFEAIFFKCQILLQFPFLSCHEYIDPYLYIASCVNDLCKTDDDETYCRAATEYARACSHAGYPIQDWRDDFPACTDKCDDSFVHRDCISCCPPTCTFEKQCLGSNLHCLDGCYCPDGLVMDNGTCISLENCPCGFHGLAYSVGSKIEQECTECVCVGGVWNCTEQDCPVQCSVVGDSHFTTFDGRHYSFIGMCQYILVKGTGKDKFTITLQKAPCEQNLGLVCLQSITLILEDDFNKQVTLGRGGQILTSPNQGFNLNGIVEIQTLSSLFILLKTTFGLKILFAIDGERIYIQLTSAWKRRTLGLCGTFNGNIRDDFLSPSGMIEGTPQLHANAWRVSSTCFAPVHVPVVDPCNINQQNIGYAAHCDVIHQELFAPCHIYISPGLYYQLCRHDACKCGSSCLCNALAHYAYLCGQHGVPIDFRTQISFCAVVCQKGMLYHHCSSFCLHSCISLSSPEQCSDDCAEGCNCPEGKFYEDTLNFCVPIFHCRCHYRGSVYQPGELIPTPSGLCQCSNGTVKCDELATPSAVHICPEGKEYFDCRFPDPELPAGGVNCETTCANLAMNFTCTPSSPCISGCVCAPGMAEHRGKCYVPESCPCIWKDWEYLSGEVIATPCYTCVCRRGMFNCTYYPCPAVCTIYGDRHYYSFDGLEYDYISDCQVFLIKSADDSDISVIAQNKKCFDNDIVCSKSVLISVGDTEIYLNDTPYKQKQSGFFLENKSTYQLWKAGYYIVVYFPEKDITILWDRKTTIHIKVGPQWKNKLSGLCGNFDKCTSNDMTTSNNLEVRNARVFGDSWALGQCESPDETIKPCEAHQNKFPYAKKECSILYSDIFASCRNVIDVTSFAKNCHEDTCNCNLGGDCECLCTSIAAYAYKCCQEGISIHWRSSTVCSLDCEYYNEGLGEGPYMLASYGQSGLVLGANMTSRSVFCLPRSSVHTSLFFYFMITPGLFKEKVSSLALVSLESAERPNYFLYVHDNDTLSLELWEANSAFHRRATFFHHQGLWIPGYSAFELYSKKGFFIIFTDSSVKASKYDDSEEFKHSSSFSIEEIQAAVPYRKMCEWRYEPCATPCFKTCSDPEALACKFLPPVEGCLPYCPKNMILDEVTLKCVYPRDCIPVIPTEPTLMPPAKPTVPMFTVWEMITPSDITVFDMLTPTTGLECEPQKFDPVYDCSQYICLNMEWQLYNWSLNCPKDVEMPDCGFRGRPVQVNSDICCPEWECPCRCSMLSELSIITFDGNNAALYSMASYILVRIPGEIIVAHIEKCSMNQNGNSLKKLAPSGRISGLCFKKLNVTTPIHKIIVNRLARKVEVDSIVVPLPFSSQELSIEDSGSMYVITTPAGLIIKWSHLTGIIDIHFGFRFNLSSYTEGLCGICNEDPDDDLRMQNGTIITNMEDIGLFIESWEIEKSFEVTMRRPVRNCTEHDCSQCIDLLNRRIFIPCHDKVSPEDFCEKMWINYTYFWNYECDALSAYVALCNKFDICIQWRTPDYCSLSCPEGKEYQPCVRPCEARTCLNQWFYGHTSCLNLREDCVCKVGTILHRPHSAQCIPEKECACTDSEDQPRTAGEIWNGGIDECTLYKCLENGSIIPIEPDCDEEPTPVCEREAEVVMGIIDKWTCCSKEVCGCDTTLCETSIPTCTNSQKLIVGHSPLSCCPQYKCECDPLKCPSISTPECREDQFMIQVRQEEPCCFSPFCVCESCTKPVPLCHDGEFLTVDLNSTHFCCPQYYCVCEPNLCPMPLLNCAEDMNLVKENVSGQCCPTWHCECNCENLIMPTCEVGEFTAIDHNFQSDCGCIQYLCEKDDVCVFQEVSVLNPGQSMIKYLEEDFCYAIECLEEKDNHTGFHTLNFTLVNCSKKCDVHQVYTPSPSDYGCCGTCKNVSCKFHMENGTSVVYAVGSTWHYNCTTYECVKTDEGAIILNYTMVCPPFNETECKMNEGIVKLYNEGCCKICKREERICQKVIIKSVIRKQDCMSQSPINVASCDGKCPSATIYNINIESHLRFCKCCRENGVRNLSVPLYCSGNGTEIMYTLQEPIDCTCQWN.

An N-terminal signal peptide occupies residues 1-31 (MNIVRKLNLMIPWSIFLLHVLLFSLQEYICA). A VWFD 1 domain is found at 121–297 (GICKTWGQYH…VQTPDDTKCV (177 aa)). 2 disulfides stabilise this stretch: Cys123–Cys257 and Cys145–Cys296. Residue Asn144 is glycosylated (N-linked (GlcNAc...) asparagine). One can recognise a TIL 1 domain in the interval 390 to 443 (CDDSFVHRDCISCCPPTCTFEKQCLGSNLHCLDGCYCPDGLVMDNGTCISLENC). N-linked (GlcNAc...) asparagine glycosylation is found at Asn434 and Asn473. The region spanning 481–654 (VQCSVVGDSH…NAWRVSSTCF (174 aa)) is the VWFD 2 domain. Intrachain disulfides connect Cys483/Cys618, Cys505/Cys653, and Cys527/Cys535. One can recognise a TIL 2 domain in the interval 745 to 800 (CQKGMLYHHCSSFCLHSCISLSSPEQCSDDCAEGCNCPEGKFYEDTLNFCVPIFHC). N-linked (GlcNAc...) asparagine glycans are attached at residues Asn826 and Asn876. The region spanning 946-1115 (AVCTIYGDRH…SWALGQCESP (170 aa)) is the VWFD 3 domain. 2 disulfides stabilise this stretch: Cys948–Cys1078 and Cys992–Cys999. Residues Asn1289, Asn1604, and Asn2198 are each glycosylated (N-linked (GlcNAc...) asparagine). A VWFD 4 domain is found at 1534-1723 (CRCSMLSELS…SWEIEKSFEV (190 aa)). Cysteines 1536 and 1683 form a disulfide. 4 cysteine pairs are disulfide-bonded: Cys2261/Cys2317, Cys2282/Cys2331, Cys2293/Cys2348, and Cys2297/Cys2350. One can recognise a CTCK domain in the interval 2261–2353 (CKREERICQK…EPIDCTCQWN (93 aa)).

This sequence belongs to the otogelin family. As to expression, expressed at high levels in fetal inner ear and heart. Low levels in fetal skeletal muscle, kidney, spleen and colon. Not detected in fetal liver, lung, brain, nor in fetal stomach. In adult tissues, highest levels in brain, kidney, heart and retina. Relatively low levels in lung, spleen and duodenum. Not detected in adult skeletal muscle, liver, nor testis.

The protein resides in the secreted. In Homo sapiens (Human), this protein is Otogelin-like protein (OTOGL).